We begin with the raw amino-acid sequence, 240 residues long: Splicing factor U2AF 35 kDa subunit (240 aa).

At Ala-2 the chain carries N-acetylalanine. The segment at 12–40 adopts a C3H1-type 1 zinc-finger fold; that stretch reads EKDKVNCSFYFKIGACRHGDRCSRLHNKP. Lys-39 carries the N6-methyllysine modification. 2 positions are modified to phosphoserine: Ser-61 and Ser-145. The region spanning 65–147 is the RRM domain; the sequence is LRCAVSDVEM…QPIHAELSPV (83 aa). Residues 149–176 form a C3H1-type 2 zinc finger; that stretch reads DFREACCRQYEMGECTRGGFCNFMHLKP. Arg-165 carries the omega-N-methylarginine modification. Positions 183-240 are disordered; that stretch reads RELYGRRRKKHRSRSRSRERRSRSRDRGRGGGGGGGGGGGGRERDRRRSRDRERSGRF. Basic residues predominate over residues 188–208; the sequence is RRRKKHRSRSRSRERRSRSRD. The segment covering 212–222 has biased composition (gly residues); the sequence is GGGGGGGGGGG. Basic and acidic residues predominate over residues 223-240; the sequence is GRERDRRRSRDRERSGRF.

It belongs to the splicing factor SR family. In terms of assembly, identified in the spliceosome C complex. Heterodimer with U2AF2. Interacts (via RS domain) with PHF5A (via N-terminus). Interacts with ZRANB2. Interacts with SDE2. Interacts with SF3B1.

It localises to the nucleus. Its subcellular location is the nucleus speckle. In terms of biological role, plays a critical role in both constitutive and enhancer-dependent splicing by mediating protein-protein interactions and protein-RNA interactions required for accurate 3'-splice site selection. Recruits U2 snRNP to the branch point. Directly mediates interactions between U2AF2 and proteins bound to the enhancers and thus may function as a bridge between U2AF2 and the enhancer complex to recruit it to the adjacent intron. This is Splicing factor U2AF 35 kDa subunit (U2AF1) from Homo sapiens (Human).